A 422-amino-acid polypeptide reads, in one-letter code: UDP-N-acetylglucosamine 1-carboxyvinyltransferase (422 aa).

23 to 24 lines the phosphoenolpyruvate pocket; the sequence is KN. Arg-92 provides a ligand contact to UDP-N-acetyl-alpha-D-glucosamine. Residue Cys-116 is the Proton donor of the active site. Position 116 is a 2-(S-cysteinyl)pyruvic acid O-phosphothioketal (Cys-116). UDP-N-acetyl-alpha-D-glucosamine contacts are provided by residues 121–125, 161–164, Asp-306, and Ile-328; these read RPVDL and KVSV.

This sequence belongs to the EPSP synthase family. MurA subfamily.

Its subcellular location is the cytoplasm. The catalysed reaction is phosphoenolpyruvate + UDP-N-acetyl-alpha-D-glucosamine = UDP-N-acetyl-3-O-(1-carboxyvinyl)-alpha-D-glucosamine + phosphate. It functions in the pathway cell wall biogenesis; peptidoglycan biosynthesis. Cell wall formation. Adds enolpyruvyl to UDP-N-acetylglucosamine. The protein is UDP-N-acetylglucosamine 1-carboxyvinyltransferase of Aliivibrio salmonicida (strain LFI1238) (Vibrio salmonicida (strain LFI1238)).